The following is a 412-amino-acid chain: Translation initiation factor 2 subunit gamma (412 aa).

Residues 8-205 (QAEMNIGMVG…AMYEHFEPPE (198 aa)) form the tr-type G domain. The segment at 17-24 (GHVDHGKT) is G1. Positions 20, 24, 45, and 47 each coordinate Mg(2+). 20–25 (DHGKTT) contacts GTP. Positions 45–49 (GISIR) are G2. Zn(2+)-binding residues include cysteine 60, cysteine 63, cysteine 72, and cysteine 75. The tract at residues 89–92 (DSPG) is G3. Residues 145-148 (NKID) and 183-185 (SAQ) contribute to the GTP site. The segment at 145–148 (NKID) is G4. Residues 183-185 (SAQ) form a G5 region.

This sequence belongs to the TRAFAC class translation factor GTPase superfamily. Classic translation factor GTPase family. EIF2G subfamily. Heterotrimer composed of an alpha, a beta and a gamma chain. The cofactor is Mg(2+).

The enzyme catalyses GTP + H2O = GDP + phosphate + H(+). Functionally, eIF-2 functions in the early steps of protein synthesis by forming a ternary complex with GTP and initiator tRNA. The sequence is that of Translation initiation factor 2 subunit gamma from Methanopyrus kandleri (strain AV19 / DSM 6324 / JCM 9639 / NBRC 100938).